A 396-amino-acid polypeptide reads, in one-letter code: Activity-regulated cytoskeleton-associated protein (396 aa).

Residues 54-78 (SKQVERELKGLHRSVGKLESNLDGY) are a coiled coil. The segment at 89 to 100 (KSIKACLCRCQE) is interaction with SH3GL1 or SH3GL3. An interaction with DNM2 region spans residues 195–214 (QPWVPGEDGQPSPGVDTQIF). At Ser-260 the chain carries Phosphoserine. Residues Lys-268 and Lys-269 each participate in a glycyl lysine isopeptide (Lys-Gly) (interchain with G-Cter in ubiquitin) cross-link. A Phosphothreonine modification is found at Thr-278. The interval 356–396 (QDDLEQAAEPAGPHLPVEDEAETLTPAPNSESVASDRTQPE) is disordered. A compositionally biased stretch (polar residues) spans 381–396 (PAPNSESVASDRTQPE).

It belongs to the ARC/ARG3.1 family. As to quaternary structure, homooligomer; homooligomerizes into virion-like capsids. Interacts with SH3GL1/endophilin-2, SH3GL3/endophilin-3 and DNM2/DYN2. Interacts with CAMK2B (in the kinase inactive state); leading to target ARC to inactive synapses. Interacts with PSEN1. In terms of processing, palmitoylation anchors the protein into the membrane by allowing direct insertion into the hydrophobic core of the lipid bilayer. Ubiquitinated by UBE3A, leading to its degradation by the proteasome, thereby promoting AMPA receptors (AMPARs) expression at synapses. Ubiquitinated by RNF216 at Lys-268 and Lys-269 limiting ARC protein levels induced by synaptic activity and thus regulating ARC-dependent forms of synaptic plasticity. Post-translationally, phosphorylation at Ser-260 by CaMK2 prevents homooligomerization into virion-like capsids by disrupting an interaction surface essential for high-order oligomerization. Phosphorylation by CaMK2 inhibits synaptic activity.

Its subcellular location is the extracellular vesicle membrane. It localises to the postsynaptic cell membrane. The protein resides in the synapse. The protein localises to the postsynaptic density. It is found in the early endosome membrane. Its subcellular location is the cell projection. It localises to the dendrite. The protein resides in the cytoplasm. The protein localises to the cytoskeleton. It is found in the cell cortex. Its subcellular location is the dendritic spine. It localises to the cytoplasmic vesicle. The protein resides in the secretory vesicle. The protein localises to the acrosome. It is found in the clathrin-coated vesicle membrane. In terms of biological role, master regulator of synaptic plasticity that self-assembles into virion-like capsids that encapsulate RNAs and mediate intercellular RNA transfer in the nervous system. ARC protein is released from neurons in extracellular vesicles that mediate the transfer of ARC mRNA into new target cells, where ARC mRNA can undergo activity-dependent translation. ARC capsids are endocytosed and are able to transfer ARC mRNA into the cytoplasm of neurons. Acts as a key regulator of synaptic plasticity: required for protein synthesis-dependent forms of long-term potentiation (LTP) and depression (LTD) and for the formation of long-term memory. Regulates synaptic plasticity by promoting endocytosis of AMPA receptors (AMPARs) in response to synaptic activity: this endocytic pathway maintains levels of surface AMPARs in response to chronic changes in neuronal activity through synaptic scaling, thereby contributing to neuronal homeostasis. Acts as a postsynaptic mediator of activity-dependent synapse elimination in the developing cerebellum by mediating elimination of surplus climbing fiber synapses. Accumulates at weaker synapses, probably to prevent their undesired enhancement. This suggests that ARC-containing virion-like capsids may be required to eliminate synaptic material. Required to transduce experience into long-lasting changes in visual cortex plasticity and for long-term memory. Involved in postsynaptic trafficking and processing of amyloid-beta A4 (APP) via interaction with PSEN1. In addition to its role in synapses, also involved in the regulation of the immune system: specifically expressed in skin-migratory dendritic cells and regulates fast dendritic cell migration, thereby regulating T-cell activation. The polypeptide is Activity-regulated cytoskeleton-associated protein (Homo sapiens (Human)).